The chain runs to 189 residues: Ras-like protein rasG (189 aa).

10-17 provides a ligand contact to GTP; that stretch reads GGGGVGKS. An Effector region motif is present at residues 32–40; sequence YDPTIEDSY. GTP-binding positions include 57-61 and 116-119; these read DTAGQ and NKCD. Residues 169-189 form a disordered region; it reads KGDSKPEKGKKKRPLKACTLL. The residue at position 186 (C186) is a Cysteine methyl ester. Residue C186 is the site of S-geranylgeranyl cysteine attachment. Positions 187-189 are cleaved as a propeptide — removed in mature form; that stretch reads TLL.

The protein belongs to the small GTPase superfamily. Ras family. In terms of assembly, interacts with ripA.

The protein localises to the cell membrane. The enzyme catalyses GTP + H2O = GDP + phosphate + H(+). Alternates between an inactive form bound to GDP and an active form bound to GTP. Activated by a guanine nucleotide-exchange factor (GEF) and inactivated by a GTPase-activating protein (GAP). Functionally, ras proteins bind GDP/GTP and possess intrinsic GTPase activity. This is Ras-like protein rasG (rasG) from Dictyostelium discoideum (Social amoeba).